The sequence spans 331 residues: Photosystem II assembly lipoprotein Ycf48 (331 aa).

The first 23 residues, 1-23, serve as a signal peptide directing secretion; that stretch reads MIPVIRSFLSLLLCVGLTFGLGG. C24 carries N-palmitoyl cysteine lipidation. C24 is lipidated: S-diacylglycerol cysteine.

It belongs to the Ycf48 family. As to quaternary structure, part of early PSII assembly complexes which includes D1 (psbA) and PsbI; not found in mature PSII. Binds to the lumenal side of PSII complexes. Interacts with YidC.

It is found in the cellular thylakoid membrane. In terms of biological role, a factor required for optimal assembly of photosystem II (PSII), acting in the early stages of PSII assembly. Also plays a role in replacement of photodamaged D1 (psbA). Assists YidC in synthesis of chlorophyll-binding proteins. The protein is Photosystem II assembly lipoprotein Ycf48 of Synechococcus sp. (strain RCC307).